The sequence spans 240 residues: UDP-2,3-diacylglucosamine hydrolase (240 aa).

Residues D8, H10, D41, N78, and H113 each coordinate Mn(2+). 78–79 (NR) is a binding site for substrate. Substrate-binding residues include D121, S159, N163, K166, and H194. Mn(2+) is bound by residues H194 and H196.

This sequence belongs to the LpxH family. Mn(2+) is required as a cofactor.

Its subcellular location is the cell inner membrane. The enzyme catalyses UDP-2-N,3-O-bis[(3R)-3-hydroxytetradecanoyl]-alpha-D-glucosamine + H2O = 2-N,3-O-bis[(3R)-3-hydroxytetradecanoyl]-alpha-D-glucosaminyl 1-phosphate + UMP + 2 H(+). The protein operates within glycolipid biosynthesis; lipid IV(A) biosynthesis; lipid IV(A) from (3R)-3-hydroxytetradecanoyl-[acyl-carrier-protein] and UDP-N-acetyl-alpha-D-glucosamine: step 4/6. Its function is as follows. Hydrolyzes the pyrophosphate bond of UDP-2,3-diacylglucosamine to yield 2,3-diacylglucosamine 1-phosphate (lipid X) and UMP by catalyzing the attack of water at the alpha-P atom. Involved in the biosynthesis of lipid A, a phosphorylated glycolipid that anchors the lipopolysaccharide to the outer membrane of the cell. The polypeptide is UDP-2,3-diacylglucosamine hydrolase (Shewanella baltica (strain OS223)).